The following is a 311-amino-acid chain: Ribonuclease Z (311 aa).

7 residues coordinate Zn(2+): His-61, His-63, Asp-65, His-66, His-137, Asp-207, and His-263. Residue Asp-65 is the Proton acceptor of the active site.

This sequence belongs to the RNase Z family. As to quaternary structure, homodimer. The cofactor is Zn(2+).

It catalyses the reaction Endonucleolytic cleavage of RNA, removing extra 3' nucleotides from tRNA precursor, generating 3' termini of tRNAs. A 3'-hydroxy group is left at the tRNA terminus and a 5'-phosphoryl group is left at the trailer molecule.. Zinc phosphodiesterase, which displays some tRNA 3'-processing endonuclease activity. Probably involved in tRNA maturation, by removing a 3'-trailer from precursor tRNA. The sequence is that of Ribonuclease Z from Thermococcus onnurineus (strain NA1).